The sequence spans 210 residues: Imidazoleglycerol-phosphate dehydratase (210 aa).

The interval 1–23 (MNDSLLSNGHAPPLRQATVDRQT) is disordered.

This sequence belongs to the imidazoleglycerol-phosphate dehydratase family.

It localises to the cytoplasm. It carries out the reaction D-erythro-1-(imidazol-4-yl)glycerol 3-phosphate = 3-(imidazol-4-yl)-2-oxopropyl phosphate + H2O. The protein operates within amino-acid biosynthesis; L-histidine biosynthesis; L-histidine from 5-phospho-alpha-D-ribose 1-diphosphate: step 6/9. The chain is Imidazoleglycerol-phosphate dehydratase from Thermosynechococcus vestitus (strain NIES-2133 / IAM M-273 / BP-1).